We begin with the raw amino-acid sequence, 266 residues long: Large ribosomal subunit protein uL3 (266 aa).

Positions 124–149 (NQKIGPKSHGGGGGSKPVRQTGSLGD) are disordered.

The protein belongs to the universal ribosomal protein uL3 family. Part of the 50S ribosomal subunit. Forms a cluster with proteins L14 and L19.

Functionally, one of the primary rRNA binding proteins, it binds directly near the 3'-end of the 23S rRNA, where it nucleates assembly of the 50S subunit. The sequence is that of Large ribosomal subunit protein uL3 from Mycoplasmopsis pulmonis (strain UAB CTIP) (Mycoplasma pulmonis).